Consider the following 95-residue polypeptide: FXYD domain-containing ion transport regulator 6 (95 aa).

The first 18 residues, 1–18 (MELVLVFLCSLLAPMVLA), serve as a signal peptide directing secretion. Residues 19 to 35 (STAEKEKEMDPFHYDYQ) lie on the Extracellular side of the membrane. The helical transmembrane segment at 36–58 (TLRIGGLVFAVVLFSVGILLILS) threads the bilayer. Residues 59 to 95 (RRCKCSFNQKPRAPGDEEAQVENLITANATEPQKAEN) are Cytoplasmic-facing.

The protein belongs to the FXYD family. In terms of assembly, regulatory subunit of the sodium/potassium-transporting ATPase which is composed of a catalytic alpha subunit, a non-catalytic beta subunit and an additional regulatory subunit. The regulatory subunit, a member of the FXYD protein family, modulates the enzymatic activity in a tissue- and isoform-specific way by changing affinities of the Na+/K+-ATPase toward Na(+), K(+) or ATP.

It localises to the cell membrane. Its function is as follows. Associates with and regulates the activity of the sodium/potassium-transporting ATPase (NKA) which catalyzes the hydrolysis of ATP coupled with the exchange of Na(+) and K(+) ions across the plasma membrane. Reduces the apparent affinity for intracellular Na(+) with no change in the apparent affinity for extracellular K(+). In addition to modulating NKA kinetics, may also function as a regulator of NKA localization to the plasma membrane. This chain is FXYD domain-containing ion transport regulator 6 (FXYD6), found in Macaca fascicularis (Crab-eating macaque).